The primary structure comprises 62 residues: Defensin BmKDfsin3 (62 aa).

A signal peptide spans 1 to 24; the sequence is MKTIVILFVLALVFCTLEMGMVEA. 3 disulfides stabilise this stretch: cysteine 28–cysteine 49, cysteine 35–cysteine 57, and cysteine 39–cysteine 59.

The protein belongs to the invertebrate defensin family. Type 2 subfamily. Low expression in both venom and non-venom glands (hemolymph).

Its subcellular location is the secreted. Its function is as follows. Antibacterial peptide active against Gram-positive bacteria (including S.aureus ATCC25923 (MIC=2.5 uM), M.luteus AB93113 (MIC=2.5 uM), and the antibiotic-resistant S.epidermidis PRSE P1389 (MIC=1.25 uM)), but not against Gram-negative bacteria (including E.coli and P.aeruginosa). Also blocks the currents of Kv1.1/KCNA1 (57% inhibition), Kv1.2/KCNA2 (27.5% inhibition), Kv1.3/KCNA3 (IC(50)=23.4 nM, 84.3% inhibition), KCa3.1/KCNN4/IK (15% inhibition), KCa2.3/KCNN3/SK3 (87.5% inhibition) and Kv11.1/KCNH2/ERG1 (30.4% inhibition) channels (tested at 1 uM). It inhibits potassium channel current by interacting with the pore region. This Olivierus martensii (Manchurian scorpion) protein is Defensin BmKDfsin3.